A 95-amino-acid chain; its full sequence is Large ribosomal subunit protein bL28 (95 aa).

The protein belongs to the bacterial ribosomal protein bL28 family.

This chain is Large ribosomal subunit protein bL28, found in Zymomonas mobilis subsp. mobilis (strain ATCC 31821 / ZM4 / CP4).